A 506-amino-acid chain; its full sequence is Maturase K (506 aa).

It belongs to the intron maturase 2 family. MatK subfamily.

It is found in the plastid. Its subcellular location is the chloroplast. Usually encoded in the trnK tRNA gene intron. Probably assists in splicing its own and other chloroplast group II introns. This chain is Maturase K, found in Empetrum nigrum (Black crowberry).